Consider the following 317-residue polypeptide: Putative 2-hydroxyacid dehydrogenase SAB2178 (317 aa).

NAD(+) contacts are provided by residues 155–156 (EI), 234–236 (ASR), and Asp260. Residue Arg236 is part of the active site. Glu265 is an active-site residue. His283 functions as the Proton donor in the catalytic mechanism. Position 283–286 (283–286 (HIGN)) interacts with NAD(+).

It belongs to the D-isomer specific 2-hydroxyacid dehydrogenase family.

This is Putative 2-hydroxyacid dehydrogenase SAB2178 from Staphylococcus aureus (strain bovine RF122 / ET3-1).